Here is a 405-residue protein sequence, read N- to C-terminus: Opine dehydrogenase (405 aa).

The protein belongs to the lysopine/nopaline/octopine/opine/vitopine dehydrogenases family.

The sequence is that of Opine dehydrogenase from Haliotis discus hannai (Japanese abalone).